The sequence spans 224 residues: Serum amyloid P-component (224 aa).

The N-terminal stretch at 1–19 (MNKLMSWVSVLIILPEAFA) is a signal peptide. The 201-residue stretch at 24–224 (RGKVFVFPRE…YVIVKPMVWG (201 aa)) folds into the Pentraxin (PTX) domain. N51 carries N-linked (GlcNAc...) asparagine glycosylation. C55 and C114 are oxidised to a cystine. Residues D77, N78, E155, Q156, and D157 each contribute to the Ca(2+) site. Residue N166 is glycosylated (N-linked (GlcNAc...) asparagine). Q167 contributes to the Ca(2+) binding site.

This sequence belongs to the pentraxin family. Homopentamer. Pentraxin (or pentaxin) have a discoid arrangement of 5 non-covalently bound subunits. Ca(2+) serves as cofactor.

The protein localises to the secreted. The chain is Serum amyloid P-component (APCS) from Bos taurus (Bovine).